The chain runs to 663 residues: 4-hydroxy-3-methylbut-2-en-1-yl diphosphate synthase (flavodoxin) (663 aa).

4 residues coordinate [4Fe-4S] cluster: cysteine 568, cysteine 571, cysteine 602, and glutamate 609.

This sequence belongs to the IspG family. [4Fe-4S] cluster serves as cofactor.

It catalyses the reaction (2E)-4-hydroxy-3-methylbut-2-enyl diphosphate + oxidized [flavodoxin] + H2O + 2 H(+) = 2-C-methyl-D-erythritol 2,4-cyclic diphosphate + reduced [flavodoxin]. It participates in isoprenoid biosynthesis; isopentenyl diphosphate biosynthesis via DXP pathway; isopentenyl diphosphate from 1-deoxy-D-xylulose 5-phosphate: step 5/6. In terms of biological role, converts 2C-methyl-D-erythritol 2,4-cyclodiphosphate (ME-2,4cPP) into 1-hydroxy-2-methyl-2-(E)-butenyl 4-diphosphate. The polypeptide is 4-hydroxy-3-methylbut-2-en-1-yl diphosphate synthase (flavodoxin) (Leptospira interrogans serogroup Icterohaemorrhagiae serovar copenhageni (strain Fiocruz L1-130)).